The following is a 212-amino-acid chain: Ependymin (212 aa).

A signal peptide spans 1–20 (MRLTGLLCVALWSASAVVLA). Residues N69, N92, and N112 are each glycosylated (N-linked (GlcNAc...) asparagine).

The protein belongs to the ependymin family. Forms disulfide-linked dimers. Post-translationally, binds calcium through the terminal sialic acids. As to expression, EPDs are synthesized in the meninx and secreted in the cerebrospinal fluid.

The protein resides in the secreted. In terms of biological role, may play a role in neural plasticity. May be involved during axon regeneration. This Clupea harengus (Atlantic herring) protein is Ependymin (epd).